Reading from the N-terminus, the 395-residue chain is 8-amino-7-oxononanoate synthase (395 aa).

Lys24 contributes to the substrate binding site. 111-112 (GF) is a binding site for pyridoxal 5'-phosphate. His136 lines the substrate pocket. Pyridoxal 5'-phosphate-binding positions include Ser184, 209-212 (DDAH), and 240-243 (TLSK). Position 243 is an N6-(pyridoxal phosphate)lysine (Lys243). A substrate-binding site is contributed by Thr357.

The protein belongs to the class-II pyridoxal-phosphate-dependent aminotransferase family. BioF subfamily. Homodimer. The cofactor is pyridoxal 5'-phosphate.

It catalyses the reaction 6-carboxyhexanoyl-[ACP] + L-alanine + H(+) = (8S)-8-amino-7-oxononanoate + holo-[ACP] + CO2. It functions in the pathway cofactor biosynthesis; biotin biosynthesis. Its function is as follows. Catalyzes the decarboxylative condensation of pimeloyl-[acyl-carrier protein] and L-alanine to produce 8-amino-7-oxononanoate (AON), [acyl-carrier protein], and carbon dioxide. This chain is 8-amino-7-oxononanoate synthase, found in Treponema denticola (strain ATCC 35405 / DSM 14222 / CIP 103919 / JCM 8153 / KCTC 15104).